Reading from the N-terminus, the 247-residue chain is 5'-nucleotidase SurE (247 aa).

4 residues coordinate a divalent metal cation: Asp8, Asp9, Ser39, and Asn91.

It belongs to the SurE nucleotidase family. A divalent metal cation is required as a cofactor.

Its subcellular location is the cytoplasm. It catalyses the reaction a ribonucleoside 5'-phosphate + H2O = a ribonucleoside + phosphate. In terms of biological role, nucleotidase that shows phosphatase activity on nucleoside 5'-monophosphates. This is 5'-nucleotidase SurE from Ruthia magnifica subsp. Calyptogena magnifica.